The following is a 309-amino-acid chain: Probable lipid kinase YegS-like (309 aa).

Residues 1–134 (MAPSHWRVIL…VDLLRIDADH (134 aa)) form the DAGKc domain. ATP contacts are provided by residues threonine 39, 65–71 (GDGTLSE), and threonine 96. Residues leucine 219, aspartate 222, and leucine 224 each contribute to the Mg(2+) site. Glutamate 280 (proton acceptor) is an active-site residue.

The protein belongs to the diacylglycerol/lipid kinase family. YegS lipid kinase subfamily. It depends on Mg(2+) as a cofactor. Ca(2+) is required as a cofactor.

It localises to the cytoplasm. In terms of biological role, probably phosphorylates lipids; the in vivo substrate is unknown. The chain is Probable lipid kinase YegS-like from Xanthomonas euvesicatoria pv. vesicatoria (strain 85-10) (Xanthomonas campestris pv. vesicatoria).